The sequence spans 374 residues: Pulmonary surfactant-associated protein D (374 aa).

The first 19 residues, 1-19 (MLHFLSMLVLLVQPLGDLG), serve as a signal peptide directing secretion. S-nitrosocysteine is present on residues Cys-34 and Cys-39. Residues 40 to 221 (SPTENGLPGR…RGIKGESGLP (182 aa)) form a disordered region. A Collagen-like domain is found at 45–221 (GLPGRDGRDG…RGIKGESGLP (177 aa)). The span at 49-64 (RDGRDGREGPRGEKGD) shows a compositional bias: basic and acidic residues. Pro-77 is modified (hydroxyproline). Lys-86 carries the post-translational modification 5-hydroxylysine. The N-linked (GlcNAc...) asparagine glycan is linked to Asn-89. Pro-95 is modified (hydroxyproline). Lys-98 carries the post-translational modification 5-hydroxylysine. Position 109 is a phosphoserine (Ser-109). 2 stretches are compositionally biased toward low complexity: residues 137 to 163 (KGEA…PAGP) and 170 to 200 (PGEQ…RGPP). A hydroxyproline mark is found at Pro-170 and Pro-176. Basic and acidic residues predominate over residues 203 to 215 (KGDRGAPGDRGIK). Residues 222 to 253 (DSAALRQQMEALNGKLQRLEAAFSRYKKAALF) adopt a coiled-coil conformation. The 116-residue stretch at 259 to 374 (VGDKIFRAAN…GEQRLVICEF (116 aa)) folds into the C-type lectin domain. Cystine bridges form between Cys-280–Cys-372 and Cys-350–Cys-364.

Belongs to the SFTPD family. As to quaternary structure, oligomeric complex of 4 set of homotrimers. Post-translationally, S-nitrosylation at Cys-34 and Cys-39 alters the quaternary structure which results in a pro-inflammatory chemoattractive signaling activity with macrophages.

The protein localises to the secreted. Its subcellular location is the extracellular space. It is found in the extracellular matrix. The protein resides in the surface film. Contributes to the lung's defense against inhaled microorganisms, organic antigens and toxins. Interacts with compounds such as bacterial lipopolysaccharides, oligosaccharides and fatty acids and modulates leukocyte action in immune response. May participate in the extracellular reorganization or turnover of pulmonary surfactant. Binds strongly maltose residues and to a lesser extent other alpha-glucosyl moieties. The protein is Pulmonary surfactant-associated protein D (Sftpd) of Rattus norvegicus (Rat).